Here is a 960-residue protein sequence, read N- to C-terminus: Dynamin-like GTPase OPA1, mitochondrial (960 aa).

A mitochondrion-targeting transit peptide spans 1–87 (MWRAGRAALA…TKYGYQPRRN (87 aa)). Residues 88-96 (FWPARLAAR) are Mitochondrial matrix-facing. A helical membrane pass occupies residues 97-113 (LLKLRYIILGSAVGGGY). At 114 to 770 (TAKKTFDEWK…NAIENMIGPD (657 aa)) the chain is on the mitochondrial intermembrane side. A coiled-coil region spans residues 210 to 254 (SDKEKIDQLQEELLHTQLKYQRILERLEKENKELRKLVLQKDDKG). Residues 217–222 (QLQEEL) carry the LQQQIQ motif motif. Lysine 228 is modified (N6-acetyllysine). An LQQQIQ motif motif is present at residues 234–239 (ERLEKE). In terms of domain architecture, Dynamin-type G spans 285 to 561 (QDHLPRVVVV…FWKMVRESVE (277 aa)). The tract at residues 295-302 (GDQSAGKT) is G1 motif. Residues serine 298, glycine 300, lysine 301, threonine 302, serine 303, and glycine 317 each contribute to the GTP site. Residue threonine 302 coordinates Mg(2+). Residues 321-324 (MMTR) are G2 motif. Positions 323 and 398 each coordinate Mg(2+). The segment at 398 to 401 (DLPG) is G3 motif. Positions 467 to 470 (TKVD) are G4 motif. Lysine 468, aspartate 470, and threonine 503 together coordinate GTP. A G5 motif region spans residues 501-504 (VVTG). Stalk region regions lie at residues 589 to 836 (DRNE…IKDT) and 874 to 928 (CNDV…VKLL). Residues 736–856 (SDKQQWDAAI…KTALNHCNLC (121 aa)) form a paddle region region. Residues 771-781 (WKKRWIYWKNR) lie within the membrane without spanning it. The Mitochondrial intermembrane segment spans residues 782–960 (TQEQCVHNET…AFIEALHQEK (179 aa)). An intrachain disulfide couples cysteine 856 to cysteine 874. The stretch at 895 to 960 (RQQLTNTEVR…AFIEALHQEK (66 aa)) forms a coiled coil.

This sequence belongs to the TRAFAC class dynamin-like GTPase superfamily. Dynamin/Fzo/YdjA family. In terms of assembly, oligomeric complex consisting of membrane-bound and soluble forms of OPA1. Interacts with RCC1L; RCC1L acts as a guanine nucleotide exchange factor (GEF) for OPA1 by exchanging bound GDP for free GTP. Interacts with CHCHD3 and IMMT; these interactions occur preferentially with soluble OPA1 forms. Interacts with PRELID1. In terms of processing, cleaved by OMA1 or YME1L downstream of the transmembrane region in response to different signals to generate soluble forms. Cleaved by OMA1 at position S1 following stress conditions, generating the short soluble form (Dynamin-like GTPase OPA1, short form; S-OPA1). AFG3L2 is involved in the regulation of OMA1-dependent processing of OPA1. PARL-dependent proteolytic processing releases an antiapoptotic soluble form not required for mitochondrial fusion. Post-translationally, cleavage at position S2 by YME1L is required to mediate oxidative phosphorylation (OXPHOS)-induced mitochondrial fusion. Cleavage occurs in the sequence motif Leu-Gln-Gln-Gln-Ile-Gln (LQQQIQ). As to expression, expressed in brain as well as retinal ganglion, starbust amacrine and horizontal cells of the retina. Absent from nerve fibers and photoreceptor cells of the retina.

Its subcellular location is the mitochondrion inner membrane. The protein localises to the mitochondrion intermembrane space. It catalyses the reaction GTP + H2O = GDP + phosphate + H(+). Activated by guanine nucleotide exchange factor RCC1L. Functionally, dynamin-related GTPase that is essential for normal mitochondrial morphology by mediating fusion of the mitochondrial inner membranes, regulating cristae morphology and maintaining respiratory chain function. Exists in two forms: the transmembrane, long form (Dynamin-like GTPase OPA1, long form; L-OPA1), which is tethered to the inner mitochondrial membrane, and the short soluble form (Dynamin-like GTPase OPA1, short form; S-OPA1), which results from proteolytic cleavage and localizes in the intermembrane space. Both forms (L-OPA1 and S-OPA1) cooperate to catalyze the fusion of the mitochondrial inner membrane. The equilibrium between L-OPA1 and S-OPA1 is essential: excess levels of S-OPA1, produced by cleavage by OMA1 following loss of mitochondrial membrane potential, lead to an impaired equilibrium between L-OPA1 and S-OPA1, inhibiting mitochondrial fusion. The balance between L-OPA1 and S-OPA1 also influences cristae shape and morphology. Involved in remodeling cristae and the release of cytochrome c during apoptosis. Proteolytic processing by PARL in response to intrinsic apoptotic signals may lead to disassembly of OPA1 oligomers and release of the caspase activator cytochrome C (CYCS) into the mitochondrial intermembrane space. Acts as a regulator of T-helper Th17 cells, which are characterized by cells with fused mitochondria with tight cristae, by mediating mitochondrial membrane remodeling: OPA1 is required for interleukin-17 (IL-17) production. Its role in mitochondrial morphology is required for mitochondrial genome maintenance. Constitutes the transmembrane long form (L-OPA1) that plays a central role in mitochondrial inner membrane fusion and cristae morphology. L-OPA1 and the soluble short form (S-OPA1) form higher-order helical assemblies that coordinate the fusion of mitochondrial inner membranes. Inner membrane-anchored L-OPA1 molecules initiate membrane remodeling by recruiting soluble S-OPA1 to rapidly polymerize into a flexible cylindrical scaffold encaging the mitochondrial inner membrane. Once at the membrane surface, the formation of S-OPA1 helices induce bilayer curvature. OPA1 dimerization through the paddle region, which inserts into cardiolipin-containing membrane, promotes GTP hydrolysis and the helical assembly of a flexible OPA1 lattice on the membrane, which drives membrane curvature and mitochondrial fusion. Plays a role in the maintenance and remodeling of mitochondrial cristae, some invaginations of the mitochondrial inner membrane that provide an increase in the surface area. Probably acts by forming helical filaments at the inside of inner membrane tubes with the shape and dimensions of crista junctions. The equilibrium between L-OPA1 and S-OPA1 influences cristae shape and morphology: increased L-OPA1 levels promote cristae stacking and elongated mitochondria, while increased S-OPA1 levels correlated with irregular cristae packing and round mitochondria shape. Its function is as follows. Constitutes the soluble short form (S-OPA1) generated by cleavage by OMA1, which plays a central role in mitochondrial inner membrane fusion and cristae morphology. The transmembrane long form (L-OPA1) and the S-OPA1 form higher-order helical assemblies that coordinate the fusion of mitochondrial inner membranes. Inner membrane-anchored L-OPA1 molecules initiate membrane remodeling by recruiting soluble S-OPA1 to rapidly polymerize into a flexible cylindrical scaffold encaging the mitochondrial inner membrane. Once at the membrane surface, the formation of S-OPA1 helices induce bilayer curvature. OPA1 dimerization through the paddle region, which inserts into cardiolipin-containing membrane, promotes GTP hydrolysis and the helical assembly of a flexible OPA1 lattice on the membrane, which drives membrane curvature and mitochondrial fusion. Excess levels of S-OPA1 produced by cleavage by OMA1 following stress conditions that induce loss of mitochondrial membrane potential, lead to an impaired equilibrium between L-OPA1 and S-OPA1, thereby inhibiting mitochondrial fusion. Involved in mitochondrial safeguard in response to transient mitochondrial membrane depolarization by mediating flickering: cleavage by OMA1 leads to excess production of S-OPA1, preventing mitochondrial hyperfusion. Plays a role in the maintenance and remodeling of mitochondrial cristae, some invaginations of the mitochondrial inner membrane that provide an increase in the surface area. Probably acts by forming helical filaments at the inside of inner membrane tubes with the shape and dimensions of crista junctions. The equilibrium between L-OPA1 and S-OPA1 influences cristae shape and morphology: increased L-OPA1 levels promote cristae stacking and elongated mitochondria, while increased S-OPA1 levels correlated with irregular cristae packing and round mitochondria shape. In terms of biological role, isoforms that contain the alternative exon 4b are required for mitochondrial genome maintenance, possibly by anchoring the mitochondrial nucleoids to the inner mitochondrial membrane. In Rattus norvegicus (Rat), this protein is Dynamin-like GTPase OPA1, mitochondrial.